The chain runs to 159 residues: MSGNSRATRLGDRIKEIVATMLERRIKDPRLGFVTVTDVELTGDLQHATVFYTVLGDAEELASSTAALESAKGLLRSEVGKQTGVKHTPTLTFQLDATPQNAAHVEEALREAAARDAEVAALAATATYAGEADPYRRPAVDDAGDSADDADPAEDERPS.

Positions 127–159 (TYAGEADPYRRPAVDDAGDSADDADPAEDERPS) are disordered. Residues 142–159 (DAGDSADDADPAEDERPS) show a composition bias toward acidic residues.

Belongs to the RbfA family. Monomer. Binds 30S ribosomal subunits, but not 50S ribosomal subunits or 70S ribosomes.

It is found in the cytoplasm. Functionally, one of several proteins that assist in the late maturation steps of the functional core of the 30S ribosomal subunit. Associates with free 30S ribosomal subunits (but not with 30S subunits that are part of 70S ribosomes or polysomes). Required for efficient processing of 16S rRNA. May interact with the 5'-terminal helix region of 16S rRNA. This is Ribosome-binding factor A from Beutenbergia cavernae (strain ATCC BAA-8 / DSM 12333 / CCUG 43141 / JCM 11478 / NBRC 16432 / NCIMB 13614 / HKI 0122).